The following is a 130-amino-acid chain: Small ribosomal subunit protein uS8 (130 aa).

It belongs to the universal ribosomal protein uS8 family. As to quaternary structure, part of the 30S ribosomal subunit.

Its function is as follows. One of the primary rRNA binding proteins, it binds directly to 16S rRNA central domain where it helps coordinate assembly of the platform of the 30S subunit. The protein is Small ribosomal subunit protein uS8 of Methanococcus vannielii (strain ATCC 35089 / DSM 1224 / JCM 13029 / OCM 148 / SB).